We begin with the raw amino-acid sequence, 237 residues long: uncharacterized protein (237 aa).

An ATP-binding site is contributed by 50–57 (APPGTGKS).

This is an uncharacterized protein from Escherichia coli (strain K12).